The primary structure comprises 1052 residues: MAAAYLDPNLNHTPNSSTKTHLGTGMERSPGAMERVLKVFHYFESNSEPTTWASIIRHGDATDVRGIIQKIVDSHKVKHVACYGFRLSHLRSEEVHWLHVDMGVSSVREKYELAHPPEEWKYELRIRYLPKGFLNQFTEDKPTLNFFYQQVKSDYMLEIADQVDQEIALKLGCLEIRRSYWEMRGNALEKKSNYEVLEKDVGLKRFFPKSLLDSVKAKTLRKLIQQTFRQFANLNREESILKFFEILSPVYRFDKECFKCALGSSWIISVELAIGPEEGISYLTDKGCNPTHLADFTQVQTIQYSNSEDKDRKGMLQLKIAGAPEPLTVTAPSLTIAENMADLIDGYCRLVNGTSQSFIIRPQKEGERALPSIPKLANSEKQGMRTHAVSVSETDDYAEIIDEEDTYTMPSTRDYEIQRERIELGRCIGEGQFGDVHQGIYMSPENPALAVAIKTCKNCTSDSVREKFLQEALTMRQFDHPHIVKLIGVITENPVWIIMELCTLGELRSFLQVRKYSLDLASLILYAYQLSTALAYLESKRFVHRDIAARNVLVSSNDCVKLGDFGLSRYMEDSTYYKASKGKLPIKWMAPESINFRRFTSASDVWMFGVCMWEILMHGVKPFQGVKNNDVIGRIENGERLPMPPNCPPTLYSLMTKCWAYDPSRRPRFTELKAQLSTILEEEKAQQEERMRMESRRQATVSWDSGGSDEAPPKPSRPGYPSPRSSEGFYPSPQHMVQTNHYQVSGYPGSHGITAMAGSIYPGQASLLDQTDSWNHRPQEIAMWQPNVEDSTVLDLRGIGQVLPTHLMEERLIRQQQEMEEDQRWLEKEERFLKPDVRLSRGSIDREDGSLQGPIGNQHIYQPVGKPDPAAPPKKPPRPGAPGHLGSLASLSSPADSYNEGVKLQPQEISPPPTANLDRSNDKVYENVTGLVKAVIEMSSKIQPAPPEEYVPMVKEVGLALRTLLATVDETIPLLPASTHREIEMAQKLLNSDLGELINKMKLAQQYVMTSLQQEYKKQMLTAAHALAVDAKNLLDVIDQARLKMLGQTRPH.

Positions 1–27 are disordered; sequence MAAAYLDPNLNHTPNSSTKTHLGTGME. Alanine 2 carries the N-acetylalanine modification. At tyrosine 5 the chain carries Phosphotyrosine. Residues 10 to 21 are compositionally biased toward polar residues; that stretch reads LNHTPNSSTKTH. Threonine 13 carries the phosphothreonine modification. Serine 29 and serine 54 each carry phosphoserine. The region spanning 35–355 is the FERM domain; it reads RVLKVFHYFE…GYCRLVNGTS (321 aa). Lysine 152 participates in a covalent cross-link: Glycyl lysine isopeptide (Lys-Gly) (interchain with G-Cter in SUMO). Position 397 is a phosphotyrosine; by autocatalysis (tyrosine 397). Tyrosine 407 is subject to Phosphotyrosine. Positions 422–680 constitute a Protein kinase domain; that stretch reads IELGRCIGEG…ELKAQLSTIL (259 aa). Residues 428 to 434, lysine 454, and 500 to 502 contribute to the ATP site; these read IGEGQFG and ELC. The active-site Proton acceptor is the aspartate 546. Position 570 is a phosphotyrosine (tyrosine 570). A phosphotyrosine; by RET and SRC mark is found at tyrosine 576 and tyrosine 577. Phosphoserine is present on serine 580. The span at 684 to 697 shows a compositional bias: basic and acidic residues; it reads KAQQEERMRMESRR. Disordered stretches follow at residues 684 to 734 and 839 to 922; these read KAQQ…PSPQ and LSRG…RSND. The segment at 707 to 1052 is interaction with TGFB1I1; the sequence is GSDEAPPKPS…LKMLGQTRPH (346 aa). Residue serine 722 is modified to Phosphoserine. Serine 732 is subject to Phosphoserine; by CDK5. A compositionally biased stretch (basic and acidic residues) spans 839–849; that stretch reads LSRGSIDREDG. A Phosphoserine modification is found at serine 843. At tyrosine 861 the chain carries Phosphotyrosine. Residues 869–880 are compositionally biased toward pro residues; sequence PAAPPKKPPRPG. Serine 887 and serine 910 each carry phosphoserine. The tract at residues 912-1052 is interaction with ARHGEF28; that stretch reads PPTANLDRSN…LKMLGQTRPH (141 aa). Phosphothreonine is present on threonine 914. The residue at position 925 (tyrosine 925) is a Phosphotyrosine.

Belongs to the protein kinase superfamily. Tyr protein kinase family. FAK subfamily. Interacts (via first Pro-rich region) with CAS family members (via SH3 domain), including BCAR1, BCAR3, and CASS4. Interacts with NEDD9 (via SH3 domain). Interacts with GIT1. Interacts with SORBS1. Interacts with ARHGEF28. Interacts with SHB. Part of a complex composed of THSD1, PTK2/FAK1, TLN1 and VCL. Interacts with PXN and TLN1. Interacts with STAT1. Interacts with DCC. Interacts with WASL. Interacts with ARHGEF7. Interacts with GRB2 and GRB7. Component of a complex that contains at least FER, CTTN and PTK2/FAK1. Interacts with BMX. Interacts with TGFB1I1. Interacts with STEAP4. Interacts with ZFYVE21. Interacts with ESR1. Interacts with PIK3R1 or PIK3R2. Interacts with SRC, FGR, FLT4 and RET. Interacts with EPHA2 in resting cells; activation of EPHA2 recruits PTPN11, leading to dephosphorylation of PTK2/FAK1 and dissociation of the complex. Interacts with EPHA1 (kinase activity-dependent). Interacts with CD4; this interaction requires the presence of HIV-1 gp120. Interacts with PIAS1. Interacts with ARHGAP26 and SHC1. Interacts with RB1CC1; this inhibits PTK2/FAK1 activity and activation of downstream signaling pathways. Interacts with P53/TP53 and MDM2. Interacts with LPXN (via LD motif 3). Interacts with MISP. Interacts with CIB1 isoform 2. Interacts with CD36. Interacts with EMP2; regulates PTK2 activation and localization. Interacts with DSCAM. Interacts with AMBRA1. Interacts (when tyrosine-phosphorylated) with tensin TNS1; the interaction is increased by phosphorylation of TNS1. Phosphorylated on tyrosine residues upon activation, e.g. upon integrin signaling. Tyr-397 is the major autophosphorylation site, but other kinases can also phosphorylate this residue. Phosphorylation at Tyr-397 promotes interaction with SRC and SRC family members, leading to phosphorylation at Tyr-576, Tyr-577 and at additional tyrosine residues. FGR promotes phosphorylation at Tyr-397 and Tyr-576. FER promotes phosphorylation at Tyr-577, Tyr-861 and Tyr-925, even when cells are not adherent. Tyr-397, Tyr-576 and Ser-722 are phosphorylated only when cells are adherent. Phosphorylation at Tyr-397 is important for interaction with BMX, PIK3R1 and SHC1. Phosphorylation at Tyr-925 is important for interaction with GRB2. Dephosphorylated by PTPN11; PTPN11 is recruited to PTK2 via EPHA2 (tyrosine phosphorylated). Microtubule-induced dephosphorylation at Tyr-397 is crucial for the induction of focal adhesion disassembly; this dephosphorylation could be catalyzed by PTPN11 and regulated by ZFYVE21. Phosphorylation on tyrosine residues is enhanced by NTN1. Post-translationally, sumoylated; this enhances autophosphorylation. Detected in B and T-lymphocytes. Isoform 1 and isoform 6 are detected in lung fibroblasts (at protein level). Ubiquitous. Expressed in epithelial cells (at protein level).

It is found in the cell junction. Its subcellular location is the focal adhesion. The protein resides in the cell membrane. It localises to the cytoplasm. The protein localises to the perinuclear region. It is found in the cell cortex. Its subcellular location is the cytoskeleton. The protein resides in the microtubule organizing center. It localises to the centrosome. The protein localises to the nucleus. It is found in the cilium basal body. It catalyses the reaction L-tyrosyl-[protein] + ATP = O-phospho-L-tyrosyl-[protein] + ADP + H(+). With respect to regulation, subject to autoinhibition, mediated by interactions between the FERM domain and the kinase domain. Activated by autophosphorylation at Tyr-397. This promotes interaction with SRC and phosphorylation at Tyr-576 and Tyr-577 in the kinase activation loop. Phosphorylation at Tyr-576 and Tyr-577 is required for maximal kinase activity. Inhibited by TAC544, TAE226, PF-573,228 and PF-562,271. In terms of biological role, non-receptor protein-tyrosine kinase that plays an essential role in regulating cell migration, adhesion, spreading, reorganization of the actin cytoskeleton, formation and disassembly of focal adhesions and cell protrusions, cell cycle progression, cell proliferation and apoptosis. Required for early embryonic development and placenta development. Required for embryonic angiogenesis, normal cardiomyocyte migration and proliferation, and normal heart development. Regulates axon growth and neuronal cell migration, axon branching and synapse formation; required for normal development of the nervous system. Plays a role in osteogenesis and differentiation of osteoblasts. Functions in integrin signal transduction, but also in signaling downstream of numerous growth factor receptors, G-protein coupled receptors (GPCR), EPHA2, netrin receptors and LDL receptors. Forms multisubunit signaling complexes with SRC and SRC family members upon activation; this leads to the phosphorylation of additional tyrosine residues, creating binding sites for scaffold proteins, effectors and substrates. Regulates numerous signaling pathways. Promotes activation of phosphatidylinositol 3-kinase and the AKT1 signaling cascade. Promotes activation of MAPK1/ERK2, MAPK3/ERK1 and the MAP kinase signaling cascade. Promotes localized and transient activation of guanine nucleotide exchange factors (GEFs) and GTPase-activating proteins (GAPs), and thereby modulates the activity of Rho family GTPases. Signaling via CAS family members mediates activation of RAC1. Phosphorylates NEDD9 following integrin stimulation. Recruits the ubiquitin ligase MDM2 to P53/TP53 in the nucleus, and thereby regulates P53/TP53 activity, P53/TP53 ubiquitination and proteasomal degradation. Phosphorylates SRC; this increases SRC kinase activity. Phosphorylates ACTN1, ARHGEF7, GRB7, RET and WASL. Promotes phosphorylation of PXN and STAT1; most likely PXN and STAT1 are phosphorylated by a SRC family kinase that is recruited to autophosphorylated PTK2/FAK1, rather than by PTK2/FAK1 itself. Promotes phosphorylation of BCAR1; GIT2 and SHC1; this requires both SRC and PTK2/FAK1. Promotes phosphorylation of BMX and PIK3R1. Isoform 6 (FRNK) does not contain a kinase domain and inhibits PTK2/FAK1 phosphorylation and signaling. Its enhanced expression can attenuate the nuclear accumulation of LPXN and limit its ability to enhance serum response factor (SRF)-dependent gene transcription. Isoform 6 (FRNK) does not contain a kinase domain and inhibits PTK2/FAK1 phosphorylation and signaling. Its enhanced expression can attenuate the nuclear accumulation of LPXN and limit its ability to enhance serum response factor (SRF)-dependent gene transcription. This is Focal adhesion kinase 1 from Homo sapiens (Human).